The primary structure comprises 333 residues: Electron transfer flavoprotein subunit alpha, mitochondrial (333 aa).

A mitochondrion-targeting transit peptide spans 1 to 19 (MFRAAAPGQLRRAASLLRF). The interval 20–204 (QSTLVIAEHA…EISEWLDQKL (185 aa)) is domain I. The residue at position 59 (Lys59) is an N6-acetyllysine; alternate. At Lys59 the chain carries N6-succinyllysine; alternate. Lys62 is subject to N6-acetyllysine. Lys69 is modified (N6-acetyllysine; alternate). Lys69 carries the post-translational modification N6-succinyllysine; alternate. Residue Lys75 is modified to N6-acetyllysine. Thr93 is subject to Phosphothreonine. N6-acetyllysine is present on residues Lys101 and Lys139. The residue at position 140 (Ser140) is a Phosphoserine. Residue Lys158 is modified to N6-acetyllysine; alternate. Lys158 carries the post-translational modification N6-succinyllysine; alternate. An N6-acetyllysine modification is found at Lys164. Residue Lys187 is modified to N6-succinyllysine. The residue at position 203 (Lys203) is an N6-acetyllysine; alternate. Lys203 carries the post-translational modification N6-succinyllysine; alternate. Positions 205–333 (TKSDRPELTG…PEMTEILKKK (129 aa)) are domain II. Lys216 carries the post-translational modification N6-succinyllysine. Arg223 contacts FAD. 2 positions are modified to N6-acetyllysine; alternate: Lys226 and Lys232. N6-succinyllysine; alternate occurs at positions 226 and 232. Residues Ser248, 263-266 (VGQT), 281-286 (SGAIQH), and Asn300 each bind FAD. The residue at position 301 (Lys301) is an N6-succinyllysine. 318–319 (DL) is a binding site for FAD.

It belongs to the ETF alpha-subunit/FixB family. In terms of assembly, heterodimer composed of ETFA and ETFB. Identified in a complex that contains ETFA, ETFB and ETFRF1. Interaction with ETFRF1 promotes dissociation of the bound FAD and loss of electron transfer activity. Interacts with TASOR. The cofactor is FAD.

It localises to the mitochondrion matrix. In terms of biological role, heterodimeric electron transfer flavoprotein that accepts electrons from several mitochondrial dehydrogenases, including acyl-CoA dehydrogenases, glutaryl-CoA and sarcosine dehydrogenase. It transfers the electrons to the main mitochondrial respiratory chain via ETF-ubiquinone oxidoreductase (ETF dehydrogenase). Required for normal mitochondrial fatty acid oxidation and normal amino acid metabolism. This is Electron transfer flavoprotein subunit alpha, mitochondrial (ETFA) from Pongo abelii (Sumatran orangutan).